The sequence spans 210 residues: Small ribosomal subunit protein uS4 (210 aa).

Residues 99-170 enclose the S4 RNA-binding domain; it reads RRLDNAVFRA…NLEAVVRRGV (72 aa).

The protein belongs to the universal ribosomal protein uS4 family. In terms of assembly, part of the 30S ribosomal subunit. Contacts protein S5. The interaction surface between S4 and S5 is involved in control of translational fidelity.

Its function is as follows. One of the primary rRNA binding proteins, it binds directly to 16S rRNA where it nucleates assembly of the body of the 30S subunit. In terms of biological role, with S5 and S12 plays an important role in translational accuracy. The protein is Small ribosomal subunit protein uS4 of Desulfotalea psychrophila (strain LSv54 / DSM 12343).